A 217-amino-acid polypeptide reads, in one-letter code: tRNA (guanine-N(7)-)-methyltransferase (217 aa).

4 residues coordinate S-adenosyl-L-methionine: Glu-45, Glu-70, Asp-97, and Asp-119. Asp-119 is a catalytic residue. Lys-123 is a binding site for substrate. An interaction with RNA region spans residues 125–130 (RHEKRR). Residues Asp-155 and 195–198 (TEYE) contribute to the substrate site.

This sequence belongs to the class I-like SAM-binding methyltransferase superfamily. TrmB family.

The catalysed reaction is guanosine(46) in tRNA + S-adenosyl-L-methionine = N(7)-methylguanosine(46) in tRNA + S-adenosyl-L-homocysteine. Its pathway is tRNA modification; N(7)-methylguanine-tRNA biosynthesis. Its function is as follows. Catalyzes the formation of N(7)-methylguanine at position 46 (m7G46) in tRNA. The polypeptide is tRNA (guanine-N(7)-)-methyltransferase (Lactobacillus helveticus (strain DPC 4571)).